The primary structure comprises 217 residues: Putative 8-oxo-dGTP diphosphatase 3 (217 aa).

The 135-residue stretch at Gly30 to Leu164 folds into the Nudix hydrolase domain. Residues Leu67–Leu92 form a disordered region. Positions 70, 85, 88, and 89 each coordinate Mg(2+). Positions Gly70–Gly91 match the Nudix box motif.

It belongs to the Nudix hydrolase family. Requires Mg(2+) as cofactor. Mn(2+) is required as a cofactor.

The catalysed reaction is 8-oxo-dGTP + H2O = 8-oxo-dGMP + diphosphate + H(+). In terms of biological role, may be involved in the GO system responsible for removing an oxidatively damaged form of guanine (7,8-dihydro-8-oxoguanine, 8-oxo-dGTP) from DNA and the nucleotide pool. 8-oxo-dGTP is inserted opposite dA and dC residues of template DNA with almost equal efficiency thus leading to A.T to G.C transversions. MutT specifically degrades 8-oxo-dGTP to the monophosphate. This is Putative 8-oxo-dGTP diphosphatase 3 (mutT3) from Mycobacterium tuberculosis (strain CDC 1551 / Oshkosh).